The sequence spans 817 residues: Phosphoenolpyruvate synthase (817 aa).

His-442 (tele-phosphohistidine intermediate) is an active-site residue. 7 residues coordinate substrate: Arg-540, Arg-587, Glu-684, Gly-706, Thr-707, Asn-708, and Asp-709. Position 684 (Glu-684) interacts with Mg(2+). Asp-709 is a Mg(2+) binding site. The active-site Proton donor is Cys-756.

This sequence belongs to the PEP-utilizing enzyme family. In terms of assembly, homooctamer. Mg(2+) is required as a cofactor.

The enzyme catalyses pyruvate + ATP + H2O = phosphoenolpyruvate + AMP + phosphate + 2 H(+). It functions in the pathway carbohydrate biosynthesis; gluconeogenesis. Functionally, catalyzes the phosphorylation of pyruvate to phosphoenolpyruvate. This chain is Phosphoenolpyruvate synthase (ppsA), found in Pyrococcus furiosus (strain ATCC 43587 / DSM 3638 / JCM 8422 / Vc1).